The primary structure comprises 115 residues: Large ribosomal subunit protein bL19 (115 aa).

Belongs to the bacterial ribosomal protein bL19 family.

Functionally, this protein is located at the 30S-50S ribosomal subunit interface and may play a role in the structure and function of the aminoacyl-tRNA binding site. The sequence is that of Large ribosomal subunit protein bL19 from Nitrosococcus oceani (strain ATCC 19707 / BCRC 17464 / JCM 30415 / NCIMB 11848 / C-107).